The chain runs to 235 residues: Secretory carrier-associated membrane protein 5B (235 aa).

At 1–39 the chain is on the cytoplasmic side; that stretch reads MSDKPNNFPPLPRFIPLKPCFYQDFDTDIPDVHRTTAKR. The chain crosses the membrane as a helical span at residues 40 to 60; sequence LYYLWMLNSITLGVNLIGCLA. Residues 61–67 are Extracellular-facing; sequence WLIGGGG. Residues 68–88 form a helical membrane-spanning segment; the sequence is ATNFGLAFLWLILFTPCSYVC. Topologically, residues 89–102 are cytoplasmic; that stretch reads WFRPIYKAFKTDSS. A helical transmembrane segment spans residues 103–125; it reads FNFMAFFFTFTGQLVISIIQAVG. The Extracellular portion of the chain corresponds to 126-148; the sequence is IPGWGVCGWIASISFFGTNVGSA. The chain crosses the membrane as a helical span at residues 149–169; sequence VVMLIPTIMFTAVAVLSFVAL. Over 170–235 the chain is Cytoplasmic; it reads TKVHRFYRGA…TPNYGYSNQM (66 aa).

The protein belongs to the SCAMP family. SCAMP5 subfamily.

It localises to the cell membrane. The protein resides in the golgi apparatus membrane. The protein localises to the golgi apparatus. It is found in the trans-Golgi network membrane. Its subcellular location is the recycling endosome membrane. It localises to the cytoplasmic vesicle. The protein resides in the secretory vesicle. The protein localises to the synaptic vesicle membrane. In terms of biological role, required for the calcium-dependent exocytosis of signal sequence-containing cytokines. Probably acts in cooperation with the SNARE machinery. The polypeptide is Secretory carrier-associated membrane protein 5B (scamp5-b) (Xenopus laevis (African clawed frog)).